A 431-amino-acid chain; its full sequence is CCA-adding enzyme (431 aa).

The ATP site is built by Ser50 and Lys53. CTP contacts are provided by Ser50 and Lys53. Residues Asp61, Asp63, and Asp112 each coordinate Mg(2+). Residues His135, Lys155, and Tyr164 each contribute to the ATP site. Residues His135, Lys155, and Tyr164 each coordinate CTP.

Belongs to the tRNA nucleotidyltransferase/poly(A) polymerase family. Archaeal CCA-adding enzyme subfamily. In terms of assembly, homodimer. Mg(2+) serves as cofactor.

It catalyses the reaction a tRNA precursor + 2 CTP + ATP = a tRNA with a 3' CCA end + 3 diphosphate. The catalysed reaction is a tRNA with a 3' CCA end + 2 CTP + ATP = a tRNA with a 3' CCACCA end + 3 diphosphate. In terms of biological role, catalyzes the addition and repair of the essential 3'-terminal CCA sequence in tRNAs without using a nucleic acid template. Adds these three nucleotides in the order of C, C, and A to the tRNA nucleotide-73, using CTP and ATP as substrates and producing inorganic pyrophosphate. tRNA 3'-terminal CCA addition is required both for tRNA processing and repair. Also involved in tRNA surveillance by mediating tandem CCA addition to generate a CCACCA at the 3' terminus of unstable tRNAs. While stable tRNAs receive only 3'-terminal CCA, unstable tRNAs are marked with CCACCA and rapidly degraded. This chain is CCA-adding enzyme, found in Thermoplasma acidophilum (strain ATCC 25905 / DSM 1728 / JCM 9062 / NBRC 15155 / AMRC-C165).